Here is a 504-residue protein sequence, read N- to C-terminus: Maturase K (504 aa).

This sequence belongs to the intron maturase 2 family. MatK subfamily.

It is found in the plastid. It localises to the chloroplast. In terms of biological role, usually encoded in the trnK tRNA gene intron. Probably assists in splicing its own and other chloroplast group II introns. The chain is Maturase K from Quercus lyrata (Overcup oak).